We begin with the raw amino-acid sequence, 457 residues long: Reticulophagy regulator 3 (457 aa).

The disordered stretch occupies residues 1–24 (MAQRVGEEEQGASGLRRRRSGARC). 3 helical membrane-spanning segments follow: residues 80-100 (FFAL…MIII), 165-185 (PGKF…LGGY), and 186-206 (IPGV…PLAI). A compositionally biased stretch (polar residues) spans 291–305 (ENGTFNLSRGQTPLT). Disordered stretches follow at residues 291–351 (ENGT…IPST) and 410–457 (AYAE…HSHQ). A compositionally biased stretch (basic and acidic residues) spans 310 to 326 (DLDRHSDPEESFARDLP). Positions 428–441 (LDTDAEADDFELLD) are enriched in acidic residues. The LIR motif signature appears at 435 to 440 (DDFELL). The span at 443-457 (SELSQMDPSSSHSHQ) shows a compositional bias: polar residues.

This sequence belongs to the RETREG family. In terms of assembly, interacts with ATG8 family modifier proteins.

Its subcellular location is the endoplasmic reticulum membrane. Endoplasmic reticulum (ER)-anchored autophagy regulator which exists in an inactive state under basal conditions but is activated following cellular stress. When activated, induces ER fragmentation and mediates ER delivery into lysosomes through sequestration into autophagosomes via interaction with ATG8 family proteins. Promotes ER membrane curvature and ER tubulation required for subsequent ER fragmentation and engulfment into autophagosomes. This is Reticulophagy regulator 3 (retreg3) from Xenopus tropicalis (Western clawed frog).